The sequence spans 170 residues: MNINRNRLVSNLIFISILVFFDQWSKYLVVTYVRLGTEYLSFFGDLFKIIHVRNTGVLFSLGSNIDSSLKNLFFLIIPIIILVFVFSFSLKENNKVSRFALILILSGGIGNIIDRLFRPLGVVDFLDVKFFGIFGLQRWPTFNFADSYVVVGMIVFIIYDLFTKDKSTNL.

The next 5 helical transmembrane spans lie at 13 to 33 (IFISILVFFDQWSKYLVVTYV), 72 to 92 (LFFLIIPIIILVFVFSFSLKE), 96 to 113 (VSRFALILILSGGIGNII), 116 to 136 (LFRPLGVVDFLDVKFFGIFGL), and 142 to 162 (FNFADSYVVVGMIVFIIYDLF). Active-site residues include Asp-124 and Asp-146.

It belongs to the peptidase A8 family.

Its subcellular location is the cell inner membrane. It catalyses the reaction Release of signal peptides from bacterial membrane prolipoproteins. Hydrolyzes -Xaa-Yaa-Zaa-|-(S,diacylglyceryl)Cys-, in which Xaa is hydrophobic (preferably Leu), and Yaa (Ala or Ser) and Zaa (Gly or Ala) have small, neutral side chains.. It functions in the pathway protein modification; lipoprotein biosynthesis (signal peptide cleavage). Functionally, this protein specifically catalyzes the removal of signal peptides from prolipoproteins. The sequence is that of Lipoprotein signal peptidase from Borrelia duttonii (strain Ly).